The sequence spans 251 residues: Flap endonuclease Xni (251 aa).

Asp104 provides a ligand contact to Mg(2+). A 5'-3' exonuclease domain is found at 160 to 249; the sequence is VLPRQLPDYW…IDGNLQQLRL (90 aa). Positions 171, 172, 180, 182, and 185 each coordinate K(+). The interaction with DNA stretch occupies residues 184–189; that stretch reads GIGPKS.

The protein belongs to the Xni family. It depends on Mg(2+) as a cofactor. Requires K(+) as cofactor.

Functionally, has flap endonuclease activity. During DNA replication, flap endonucleases cleave the 5'-overhanging flap structure that is generated by displacement synthesis when DNA polymerase encounters the 5'-end of a downstream Okazaki fragment. The polypeptide is Flap endonuclease Xni (Salmonella dublin (strain CT_02021853)).